The following is a 265-amino-acid chain: Putative cysteine-rich receptor-like protein kinase 9 (265 aa).

A signal peptide spans 1–23 (MSSLISFIFLFLFSFLTSFKASA). Gnk2-homologous domains lie at 27–131 (FYLN…DKNI) and 142–244 (FILS…LYSF). Residues Asn-35, Asn-60, Asn-69, Asn-153, Asn-177, and Asn-246 are each glycosylated (N-linked (GlcNAc...) asparagine).

The protein belongs to the protein kinase superfamily. Ser/Thr protein kinase family. CRK subfamily.

Its subcellular location is the secreted. In Arabidopsis thaliana (Mouse-ear cress), this protein is Putative cysteine-rich receptor-like protein kinase 9 (CRK9).